Reading from the N-terminus, the 361-residue chain is Peptide chain release factor 1 (361 aa).

The residue at position 235 (Q235) is an N5-methylglutamine.

It belongs to the prokaryotic/mitochondrial release factor family. Methylated by PrmC. Methylation increases the termination efficiency of RF1.

Its subcellular location is the cytoplasm. Peptide chain release factor 1 directs the termination of translation in response to the peptide chain termination codons UAG and UAA. The chain is Peptide chain release factor 1 from Chlamydia felis (strain Fe/C-56) (Chlamydophila felis).